The primary structure comprises 2079 residues: Non-reducing polyketide synthase Dhc5 (2079 aa).

Residues 9 to 246 (LLFGDVTDPW…DELNIHALQH (238 aa)) are N-terminal acylcarrier protein transacylase domain (SAT). A Ketosynthase family 3 (KS3) domain is found at 366-798 (NDGIAIVGMA…GGNACLLLED (433 aa)). Active-site for beta-ketoacyl synthase activity residues include Cys-543, His-678, and His-717. The tract at residues 895–1199 (VFVFTGQGSH…MTHSLQPKTS (305 aa)) is malonyl-CoA:ACP transacylase (MAT) domain. The active-site For acyl/malonyl transferase activity is Ser-986. The tract at residues 1268–1414 (EPLISTCAQY…DPTRSQVEWD (147 aa)) is N-terminal hotdog fold. A PKS/mFAS DH domain is found at 1268–1584 (EPLISTCAQY…YQELPRATWK (317 aa)). Residues 1304–1581 (MDGHKMQGIG…DIRYQELPRA (278 aa)) form a product template (PT) domain region. The interval 1435-1584 (RGHRMQPEVF…YQELPRATWK (150 aa)) is C-terminal hotdog fold. A disordered region spans residues 1613–1639 (RELQQPSSATVPAQETTIDEPEQQEGE). A compositionally biased stretch (polar residues) spans 1615 to 1628 (LQQPSSATVPAQET). The Carrier domain occupies 1641–1718 (AAGARLFNAI…DLRKEFRANE (78 aa)). At Ser-1678 the chain carries O-(pantetheine 4'-phosphoryl)serine. Residues 1721-1784 (VENPRFSATP…EQKRPVKIDD (64 aa)) form a disordered region. Low complexity predominate over residues 1727–1757 (SATPSSAEASIPSSPSSLAHPMSDSASSLSP). Positions 1758-1784 (SDREEALPLERQSMTKREQKRPVKIDD) are enriched in basic and acidic residues. The tract at residues 1812–2057 (ADGTGTIATY…LSVAGDHLDL (246 aa)) is thioesterase (TE) domain. His-2064 functions as the For thioesterase activity in the catalytic mechanism.

Its pathway is mycotoxin biosynthesis. Its function is as follows. Highly reducing polyketide synthase; part of the gene cluster that mediates the biosynthesis of 10,11-dehydrocurvularin, a prevalent fungal phytotoxin with heat shock response and immune-modulatory activities. The highly reducing polyketide synthase Dhc3 is responsible for biosynthesis up to the tetraketide stage. The non-reducing polyketide synthase Dhc5 then conducts four additional chain extension cycles, producing the unreduced part of the nascent octaketide from C-1 to C-8 in 10,11-dehydrocurvularin. This chain is Non-reducing polyketide synthase Dhc5, found in Alternaria cinerariae.